The sequence spans 681 residues: Pentatricopeptide repeat-containing protein At2g22410, mitochondrial (681 aa).

The N-terminal 32 residues, 1–32, are a transit peptide targeting the mitochondrion; it reads MNISKAKLLLLPPPLTPKLNRSLYSHSQRRTR. PPR repeat units follow at residues 117–151, 155–189, 190–220, 221–255, 256–290, 291–321, 322–356, 357–387, 388–422, 423–453, 454–488, 489–519, and 525–555; these read NIFS…GCCE, DHFT…RLEL, VSHV…SPVR, DLVS…GVKP, DDVT…GLRM, TIPL…LEKR, TIVS…DVVL, WNAM…NTKP, DEIT…SLSL, NVAL…IQTR, NSLT…GIAP, DEIT…MKSR, and QLKH…MPME. The segment at 560-635 is type E motif; sequence VWGALLFGCR…IPGCSSIEVN (76 aa). The segment at 636–666 is type E(+) motif; the sequence is GIVCEFIVRDKSRPESEKIYDRLHCLGRHMR.

The protein belongs to the PPR family. PCMP-E subfamily.

It is found in the mitochondrion. This is Pentatricopeptide repeat-containing protein At2g22410, mitochondrial (PCMP-E28) from Arabidopsis thaliana (Mouse-ear cress).